The sequence spans 361 residues: Phosphoserine aminotransferase (361 aa).

Arg-43 provides a ligand contact to L-glutamate. Residues 77-78 (AS), Trp-103, Thr-153, Asp-173, and Gln-196 each bind pyridoxal 5'-phosphate. At Lys-197 the chain carries N6-(pyridoxal phosphate)lysine. Residue 238 to 239 (NT) coordinates pyridoxal 5'-phosphate.

The protein belongs to the class-V pyridoxal-phosphate-dependent aminotransferase family. SerC subfamily. Homodimer. Requires pyridoxal 5'-phosphate as cofactor.

The protein resides in the cytoplasm. It catalyses the reaction O-phospho-L-serine + 2-oxoglutarate = 3-phosphooxypyruvate + L-glutamate. The enzyme catalyses 4-(phosphooxy)-L-threonine + 2-oxoglutarate = (R)-3-hydroxy-2-oxo-4-phosphooxybutanoate + L-glutamate. Its pathway is amino-acid biosynthesis; L-serine biosynthesis; L-serine from 3-phospho-D-glycerate: step 2/3. The protein operates within cofactor biosynthesis; pyridoxine 5'-phosphate biosynthesis; pyridoxine 5'-phosphate from D-erythrose 4-phosphate: step 3/5. In terms of biological role, catalyzes the reversible conversion of 3-phosphohydroxypyruvate to phosphoserine and of 3-hydroxy-2-oxo-4-phosphonooxybutanoate to phosphohydroxythreonine. In Pseudomonas entomophila (strain L48), this protein is Phosphoserine aminotransferase.